Here is a 129-residue protein sequence, read N- to C-terminus: Small ribosomal subunit protein bS6 (129 aa).

Positions 100 to 129 (SIMLKQKEERAPRREERSEAKPEAKSEAAE) are disordered. Basic and acidic residues predominate over residues 104-129 (KQKEERAPRREERSEAKPEAKSEAAE).

It belongs to the bacterial ribosomal protein bS6 family.

In terms of biological role, binds together with bS18 to 16S ribosomal RNA. This Vibrio parahaemolyticus serotype O3:K6 (strain RIMD 2210633) protein is Small ribosomal subunit protein bS6.